We begin with the raw amino-acid sequence, 199 residues long: MALNGAEVDDFSWEPPTEAETKVLQARRERQDRISRLMGDYLLRGYRMLGETCADCGTILLQDKQRKIYCVACQELDSDVDKDNPALNAQAALSQAREHQLASASELPLGSRPAPQPPVPRPEHCEGAAAGLKAAQGPPAPAVPPNTDVMACTQTALLQKLTWASAELGSSTSLETSIQLCGLIRACAEALRSLQQLQH.

Ala2 carries the N-acetylalanine modification. The Zn(2+) site is built by Cys53, Cys56, Cys70, and Cys73. A Phosphoserine modification is found at Ser94. Positions Gln100–Cys125 are disordered. The Nuclear export signal signature appears at Ser173–Leu194.

In terms of assembly, homodimer. Requires Zn(2+) as cofactor.

The protein localises to the cytoplasm. Might play a role in mitosis. Antigenic molecule. Could be a centromere-associated protein. May induce anti-centromere antibodies. This Homo sapiens (Human) protein is Protein ZNRD2.